Consider the following 498-residue polypeptide: Serine hydroxymethyltransferase, mitochondrial (498 aa).

The residue at position 273 (Lys-273) is an N6-(pyridoxal phosphate)lysine.

Belongs to the SHMT family. As to quaternary structure, homotetramer. It depends on pyridoxal 5'-phosphate as a cofactor.

The protein localises to the mitochondrion. It carries out the reaction (6R)-5,10-methylene-5,6,7,8-tetrahydrofolate + glycine + H2O = (6S)-5,6,7,8-tetrahydrofolate + L-serine. The protein operates within one-carbon metabolism; tetrahydrofolate interconversion. In terms of biological role, interconversion of serine and glycine. This Kluyveromyces lactis (strain ATCC 8585 / CBS 2359 / DSM 70799 / NBRC 1267 / NRRL Y-1140 / WM37) (Yeast) protein is Serine hydroxymethyltransferase, mitochondrial (SHM1).